Consider the following 218-residue polypeptide: Kappa-scoloptoxin(11)-Ssd1b (218 aa).

An N-terminal signal peptide occupies residues 1-16 (MFYSHLLFFTFTFACS). Residues 17-25 (SSLNRKTKR) constitute a propeptide that is removed on maturation.

In terms of processing, contains 8 disulfide bonds. As to expression, expressed by the venom gland.

The protein localises to the secreted. Its function is as follows. Voltage-gated potassium channel inhibitor. In Scolopendra dehaani (Thai centipede), this protein is Kappa-scoloptoxin(11)-Ssd1b.